A 489-amino-acid polypeptide reads, in one-letter code: Equilibrative nucleobase transporter 1 (489 aa).

Residues 17–37 (LLECLGFAGVLFGWTSLVFVF) form a helical membrane-spanning segment. Asn-56 carries an N-linked (GlcNAc...) asparagine glycan. 4 consecutive transmembrane segments (helical) span residues 72–92 (LIFTLASFTINFMTFPTGYIF), 102–122 (LIAIFLYTSATLTIAFTSADS), 123–143 (AVLLFLAMPMLAVGGILFLIT), and 158–180 (IITMYNGAFDSSSAVFLIIKLLY). At Ser-253 the chain carries Phosphoserine. Thr-258 bears the Phosphothreonine mark. 6 helical membrane passes run 277 to 297 (FAWHVVWLSVIQLWHYLFIGT), 318 to 338 (NAFAVTQFFGVLCAPWNGLLM), 358 to 380 (AAALRSVVPSLTLTSLLSLGFAV), 402 to 422 (SFLYGCNAAFLTLAFPSEHFG), 426 to 446 (GLVMALSAVVSLLQFPLFTLI), and 455 to 475 (LYVNLMLVLLTLLTFIHPFLV).

The protein belongs to the SLC43A transporter (TC 2.A.1.44) family.

It is found in the basolateral cell membrane. It carries out the reaction adenine(out) = adenine(in). It catalyses the reaction guanine(out) = guanine(in). The enzyme catalyses hypoxanthine(out) = hypoxanthine(in). In terms of biological role, sodium-independent purine-selective nucleobase transporter which mediates the equilibrative transport of extracellular purine nucleobases such as adenine, guanine and hypoxanthine. May regulate fatty acid (FA) transport in adipocytes, acting as a positive regulator of FA efflux and as a negative regulator of FA uptake. In Bos taurus (Bovine), this protein is Equilibrative nucleobase transporter 1 (SLC43A3).